The following is a 99-amino-acid chain: Plastocyanin (99 aa).

One can recognise a Plastocyanin-like domain in the interval 1–99 (IEVLLGSDDG…AGMVGKVTVN (99 aa)). 4 residues coordinate Cu cation: His-37, Cys-84, His-87, and Met-92.

This sequence belongs to the plastocyanin family. The cofactor is Cu(2+).

The protein resides in the plastid. Its subcellular location is the chloroplast thylakoid membrane. Its function is as follows. Participates in electron transfer between P700 and the cytochrome b6-f complex in photosystem I. The protein is Plastocyanin (PETE) of Solanum crispum (Chilean potato-tree).